The primary structure comprises 570 residues: Putative pyruvate decarboxylase C3G9.11c (570 aa).

Residues D30 and H119 each coordinate pyruvate. Thiamine diphosphate-binding positions include T396 and G419–I421. D451 serves as a coordination point for Mg(2+). Thiamine diphosphate contacts are provided by residues G452–S453 and N478–I483. N478 and G480 together coordinate Mg(2+). Position 484 (E484) interacts with pyruvate.

It belongs to the TPP enzyme family. In terms of assembly, homotetramer. Requires Mg(2+) as cofactor. Thiamine diphosphate serves as cofactor.

The protein localises to the cytoplasm. The protein resides in the nucleus. The catalysed reaction is a 2-oxocarboxylate + H(+) = an aldehyde + CO2. It carries out the reaction pyruvate + H(+) = acetaldehyde + CO2. This is Putative pyruvate decarboxylase C3G9.11c from Schizosaccharomyces pombe (strain 972 / ATCC 24843) (Fission yeast).